The primary structure comprises 240 residues: MORN repeat-containing protein 3 (240 aa).

Residues Cys6–Gly35 form an interaction with MDM2 region. MORN repeat units follow at residues Tyr38–Ala60, Tyr62–Thr84, Tyr91–Tyr113, Tyr114–Ile136, Tyr137–Arg159, Tyr160–Gln182, and Phe184–Glu205. An interaction with SIRT1 region spans residues Thr76 to Lys100. The interval Ala206 to Asp240 is interaction with TP53.

In terms of assembly, interacts with MEIG1. Interacts with TP53, MDM2 and SIRT1; the interactions mediate post-transcriptional modifications of TP53 by MDM2 and SIRT1.

It localises to the cytoplasmic vesicle. It is found in the secretory vesicle. The protein localises to the acrosome. Assembles a suppression complex (suppresome) by tethering SIRT1 and MDM2 to regulate composite modifications of p53/TP53. Confers both deacetylation-mediated functional inactivation, by SIRT1, and ubiquitination-dependent degradation, by MDM2, of p53/TP53, promoting a proliferative and cell survival behaviors. May play a role in the regulation of spermatogenesis. The protein is MORN repeat-containing protein 3 of Homo sapiens (Human).